Consider the following 199-residue polypeptide: FMN-dependent NADH:quinone oxidoreductase (199 aa).

Residues Ser9, 15–17 (SNS), and 95–98 (MYNF) contribute to the FMN site.

It belongs to the azoreductase type 1 family. In terms of assembly, homodimer. The cofactor is FMN.

It catalyses the reaction 2 a quinone + NADH + H(+) = 2 a 1,4-benzosemiquinone + NAD(+). The catalysed reaction is N,N-dimethyl-1,4-phenylenediamine + anthranilate + 2 NAD(+) = 2-(4-dimethylaminophenyl)diazenylbenzoate + 2 NADH + 2 H(+). In terms of biological role, quinone reductase that provides resistance to thiol-specific stress caused by electrophilic quinones. Functionally, also exhibits azoreductase activity. Catalyzes the reductive cleavage of the azo bond in aromatic azo compounds to the corresponding amines. The sequence is that of FMN-dependent NADH:quinone oxidoreductase from Aromatoleum aromaticum (strain DSM 19018 / LMG 30748 / EbN1) (Azoarcus sp. (strain EbN1)).